Reading from the N-terminus, the 431-residue chain is MKQYIEIIDVVARQILDSRCFPTVEVEVYLEDGTVGRAAVPSGASTGIYEAVELRDGDKDKYLGKGVEKAVANVNDTIAEEIIGLNVLDQAYIDKTLIELDGTNNKGKLGANAILGVSLAVAQAAANYLGMPLYQYIGGVNAKVLPVPMMNIINGGSHADNSVDIQEFMIMPVGFDCFERAVRACAEVYHALKKTLNSKGYSTGVGDEGGFAPNLKSNAEAIEVILEAIEKAGYEPGKEFFIAIDAASSEYYKDGKYVLEHEGKTLTAAEMVDFFEDWVNKYPIISIEDGMAEEDWEGWKLMTERLGKKVQLVGDDLFVTNTERLKTGIEKGIANSILIKLNQIGTLTETLNAIEMANRAGYTAVVSHRSGETEDTTIADLVVAVNAGQIKTGAPARSERVAKYNQLIRINEELGEVAEYRGRNAFFNLSK.

Position 166 (glutamine 166) interacts with (2R)-2-phosphoglycerate. Residue glutamate 208 is the Proton donor of the active site. 3 residues coordinate Mg(2+): aspartate 245, glutamate 288, and aspartate 315. (2R)-2-phosphoglycerate contacts are provided by lysine 340, arginine 369, serine 370, and lysine 391. Lysine 340 (proton acceptor) is an active-site residue.

It belongs to the enolase family. Mg(2+) is required as a cofactor.

It localises to the cytoplasm. The protein resides in the secreted. It is found in the cell surface. It carries out the reaction (2R)-2-phosphoglycerate = phosphoenolpyruvate + H2O. It participates in carbohydrate degradation; glycolysis; pyruvate from D-glyceraldehyde 3-phosphate: step 4/5. Functionally, catalyzes the reversible conversion of 2-phosphoglycerate (2-PG) into phosphoenolpyruvate (PEP). It is essential for the degradation of carbohydrates via glycolysis. The polypeptide is Enolase (Clostridium perfringens (strain 13 / Type A)).